A 439-amino-acid polypeptide reads, in one-letter code: Glutamine synthetase (439 aa).

One can recognise a GS beta-grasp domain in the interval 12–93 (RSPKFVQLIF…VYGYIYKDGK (82 aa)). A GS catalytic domain is found at 99–439 (PRGVLKRVIE…EWELERYFFI (341 aa)). Positions 122 and 124 each coordinate Mg(2+). An ATP-binding site is contributed by Glu172. Mg(2+)-binding residues include Glu177 and Glu184. Gly229 lines the L-glutamate pocket. Position 233 (His233) interacts with Mg(2+). ATP-binding positions include 235–237 (HIS) and Ser237. Arg283, Glu289, and Arg301 together coordinate L-glutamate. ATP contacts are provided by Arg301 and Arg306. Position 318 (Glu318) interacts with Mg(2+). Arg320 contributes to the L-glutamate binding site.

Belongs to the glutamine synthetase family. As to quaternary structure, oligomer of 12 subunits arranged in the form of two hexagons. Mg(2+) serves as cofactor.

The protein resides in the cytoplasm. It carries out the reaction L-glutamate + NH4(+) + ATP = L-glutamine + ADP + phosphate + H(+). In terms of biological role, probably involved in nitrogen metabolism via ammonium assimilation. Catalyzes the ATP-dependent biosynthesis of glutamine from glutamate and ammonia. The sequence is that of Glutamine synthetase from Pyrococcus abyssi (strain GE5 / Orsay).